Reading from the N-terminus, the 363-residue chain is Protein-glutamate methylesterase/protein-glutamine glutaminase 2 (363 aa).

Residues 6-123 (RVLIVDDSAS…AQFLLESKIH (118 aa)) form the Response regulatory domain. Residue aspartate 57 is modified to 4-aspartylphosphate. In terms of domain architecture, CheB-type methylesterase spans 172–363 (ARTTESVICI…AMEILRAGNR (192 aa)). Catalysis depends on residues serine 184, histidine 210, and aspartate 306.

It belongs to the CheB family. In terms of processing, phosphorylated by CheA. Phosphorylation of the N-terminal regulatory domain activates the methylesterase activity.

Its subcellular location is the cytoplasm. It carries out the reaction [protein]-L-glutamate 5-O-methyl ester + H2O = L-glutamyl-[protein] + methanol + H(+). It catalyses the reaction L-glutaminyl-[protein] + H2O = L-glutamyl-[protein] + NH4(+). Functionally, involved in chemotaxis. Part of a chemotaxis signal transduction system that modulates chemotaxis in response to various stimuli. Catalyzes the demethylation of specific methylglutamate residues introduced into the chemoreceptors (methyl-accepting chemotaxis proteins or MCP) by CheR. Also mediates the irreversible deamidation of specific glutamine residues to glutamic acid. The sequence is that of Protein-glutamate methylesterase/protein-glutamine glutaminase 2 from Rhodospirillum rubrum (strain ATCC 11170 / ATH 1.1.1 / DSM 467 / LMG 4362 / NCIMB 8255 / S1).